The chain runs to 770 residues: Proprotein convertase subtilisin/kexin type 7 (770 aa).

Positions 1 to 36 are cleaved as a signal peptide; that stretch reads MPKGRQKVPHLDAHLGLPICLWLELAIFFLVPQVMG. The propeptide occupies 37 to 140; sequence LSEAGGLDIL…EQTLLKRAKR (104 aa). Residues 141 to 666 lie on the Extracellular side of the membrane; sequence SIHFNDPKYP…YTITPNTLKT (526 aa). The region spanning 152–472 is the Peptidase S8 domain; that stretch reads QWHLNNRRSP…FGLLNAWRLV (321 aa). 2 N-linked (GlcNAc...) asparagine glycosylation sites follow: asparagine 166 and asparagine 174. Aspartate 186 (charge relay system) is an active-site residue. The disordered stretch occupies residues 195-228; sequence DIAPNYSPEGSYDLNSNDPDPMPHPDEENGNHHG. Positions 215-225 are enriched in basic and acidic residues; it reads PMPHPDEENGN. Catalysis depends on histidine 227, which acts as the Charge relay system. The N-linked (GlcNAc...) asparagine glycan is linked to asparagine 240. The active-site Charge relay system is serine 405. Positions 480–617 constitute a P/Homo B domain; the sequence is SVPYLASYVS…QLTLYGSMWS (138 aa). The N-linked (GlcNAc...) asparagine glycan is linked to asparagine 510. Residues 667–687 form a helical membrane-spanning segment; it reads LVLVGCFSVFWTIYYMLEVCL. The Cytoplasmic segment spans residues 688 to 770; sequence SQRNKASTHG…LLQGKSGQIC (83 aa).

The protein belongs to the peptidase S8 family. Requires Ca(2+) as cofactor. In terms of tissue distribution, widely expressed. Expressed in brain, lung, muscle, heart, liver, kidney, spleen and thymus.

The protein resides in the golgi apparatus. The protein localises to the trans-Golgi network membrane. Its activity is regulated as follows. Inhibited by zinc and copper. Serine endoprotease that processes various proproteins by cleavage at paired basic amino acids, recognizing the RXXX[KR]R consensus motif. Likely functions in the constitutive secretory pathway. This Mus musculus (Mouse) protein is Proprotein convertase subtilisin/kexin type 7 (Pcsk7).